Consider the following 333-residue polypeptide: uncharacterized protein (333 aa).

The 274-residue stretch at Asn45–Ile318 folds into the Fe/B12 periplasmic-binding domain.

This is an uncharacterized protein from Methanocaldococcus jannaschii (strain ATCC 43067 / DSM 2661 / JAL-1 / JCM 10045 / NBRC 100440) (Methanococcus jannaschii).